The following is a 236-amino-acid chain: (5-formylfuran-3-yl)methyl phosphate synthase (236 aa).

Catalysis depends on Lys-27, which acts as the Schiff-base intermediate with substrate. Lys-85 (proton acceptor) is an active-site residue.

This sequence belongs to the MfnB family.

It catalyses the reaction 2 D-glyceraldehyde 3-phosphate = 4-(hydroxymethyl)-2-furancarboxaldehyde phosphate + phosphate + 2 H2O. The protein operates within cofactor biosynthesis; methanofuran biosynthesis. Catalyzes the formation of 4-(hydroxymethyl)-2-furancarboxaldehyde phosphate (4-HFC-P) from two molecules of glyceraldehyde-3-P (GA-3-P). The protein is (5-formylfuran-3-yl)methyl phosphate synthase of Methanococcus maripaludis (strain C6 / ATCC BAA-1332).